Here is an 81-residue protein sequence, read N- to C-terminus: RNA-binding protein Hfq (81 aa).

The region spanning 10-69 (DPFLNTLRREHVPVSIYLVNGIKLQGQIESFDQYVVLLRNTVTQMVYKHAISTIVPGRAV) is the Sm domain.

Belongs to the Hfq family. In terms of assembly, homohexamer.

Its function is as follows. RNA chaperone that binds small regulatory RNA (sRNAs) and mRNAs to facilitate mRNA translational regulation in response to envelope stress, environmental stress and changes in metabolite concentrations. Also binds with high specificity to tRNAs. In Variovorax paradoxus (strain S110), this protein is RNA-binding protein Hfq.